The following is a 127-amino-acid chain: Fluoride-specific ion channel FluC (127 aa).

A run of 3 helical transmembrane segments spans residues Leu-28–Met-48, Thr-73–Ile-93, and Val-98–Leu-118. The Na(+) site is built by Gly-77 and Thr-80.

This sequence belongs to the fluoride channel Fluc/FEX (TC 1.A.43) family.

It is found in the cell inner membrane. It carries out the reaction fluoride(in) = fluoride(out). Na(+) is not transported, but it plays an essential structural role and its presence is essential for fluoride channel function. In terms of biological role, fluoride-specific ion channel. Important for reducing fluoride concentration in the cell, thus reducing its toxicity. The sequence is that of Fluoride-specific ion channel FluC from Beijerinckia indica subsp. indica (strain ATCC 9039 / DSM 1715 / NCIMB 8712).